The primary structure comprises 566 residues: OTU domain-containing protein 5 (566 aa).

2 disordered regions span residues 1–117 (MTIL…GDAL) and 145–175 (GPGH…GAGY). Residues 11-30 (PPDADPANEPPPPGPLPPAP) show a composition bias toward pro residues. Residues 34–47 (AGVGVGGGGTGVGG) show a composition bias toward gly residues. Residues 63–75 (ASPPPQGPLPGPP) are compositionally biased toward pro residues. Residue S64 is modified to Phosphoserine. Low complexity predominate over residues 84–97 (AVPPGAVAGPRPQQ). Positions 105–115 (GPGGPGGGPGD) are enriched in gly residues. S165 is subject to Phosphoserine. At Y175 the chain carries Phosphotyrosine. Position 177 is a phosphoserine (S177). The residue at position 195 (T195) is a Phosphothreonine. In terms of domain architecture, OTU spans 213–336 (FIIKQMKEDG…NIHYNSVVNP (124 aa)). Positions 218–224 (MKEDGAC) are cys-loop. D221 is an active-site residue. The active-site Nucleophile is the C224. The tract at residues 273-283 (KRKNNCHGNHI) is variable-loop. Phosphoserine is present on S323. The interval 324–329 (YHRNIH) is his-loop. H329 is a catalytic residue. S332 and S370 each carry phosphoserine. The interval 413-499 (ARQVRGPSQP…TSSQFSAGGD (87 aa)) is disordered. Low complexity-rich tracts occupy residues 425–438 (ASAT…AASS) and 445–457 (SRSP…ASSP). Position 447 is a phosphoserine (S447). The residue at position 502 (T502) is a Phosphothreonine. The residue at position 503 (S503) is a Phosphoserine.

This sequence belongs to the peptidase C85 family. As to quaternary structure, interacts with TRAF3. Post-translationally, phosphorylation at Ser-177 is required for deubiquitinating activity. Phosphorylation at Ser-323, Ser-332 and Ser-503 by MTOR promotes its activity.

Its subcellular location is the nucleus. The enzyme catalyses Thiol-dependent hydrolysis of ester, thioester, amide, peptide and isopeptide bonds formed by the C-terminal Gly of ubiquitin (a 76-residue protein attached to proteins as an intracellular targeting signal).. With respect to regulation, inhibited by N-ethyl-maleimide (NEM). In terms of biological role, deubiquitinating enzyme that functions as a negative regulator of the innate immune system. Has peptidase activity towards 'Lys-48'- and 'Lys-63'-linked polyubiquitin chains. Can also cleave 'Lys-11'-linked ubiquitin chains (in vitro). Acts via TRAF3 deubiquitination and subsequent suppression of type I interferon (IFN) production. Controls neuroectodermal differentiation through cleaving 'Lys-48'-linked ubiquitin chains to counteract degradation of select chromatin regulators such as ARID1A, HDAC2 and HCF1. Acts as a positive regulator of mTORC1 and mTORC2 signaling following phosphorylation by MTOR: acts by mediating deubiquitination of BTRC, leading to its stability. In Mus musculus (Mouse), this protein is OTU domain-containing protein 5.